The sequence spans 291 residues: ATP synthase gamma chain (291 aa).

This sequence belongs to the ATPase gamma chain family. In terms of assembly, F-type ATPases have 2 components, CF(1) - the catalytic core - and CF(0) - the membrane proton channel. CF(1) has five subunits: alpha(3), beta(3), gamma(1), delta(1), epsilon(1). CF(0) has three main subunits: a, b and c.

The protein localises to the cell inner membrane. Produces ATP from ADP in the presence of a proton gradient across the membrane. The gamma chain is believed to be important in regulating ATPase activity and the flow of protons through the CF(0) complex. This chain is ATP synthase gamma chain, found in Cupriavidus necator (strain ATCC 17699 / DSM 428 / KCTC 22496 / NCIMB 10442 / H16 / Stanier 337) (Ralstonia eutropha).